The chain runs to 139 residues: Putative pre-16S rRNA nuclease (139 aa).

The protein belongs to the YqgF nuclease family.

Its subcellular location is the cytoplasm. Its function is as follows. Could be a nuclease involved in processing of the 5'-end of pre-16S rRNA. The polypeptide is Putative pre-16S rRNA nuclease (Streptococcus pyogenes serotype M1).